Reading from the N-terminus, the 86-residue chain is Neuropeptide-like 3 (86 aa).

An N-terminal signal peptide occupies residues Met1 to Ala16. 2 propeptides span residues Ala17 to Gln50 and Ala63 to Lys75. Position 85 is an isoleucine amide (Ile85).

It is found in the secreted. The protein is Neuropeptide-like 3 (Nplp3) of Drosophila yakuba (Fruit fly).